The following is a 461-amino-acid chain: Phosphatidate cytidylyltransferase 1 (461 aa).

The segment at Met1–Thr68 is disordered. Arg7 is subject to Omega-N-methylarginine. A compositionally biased stretch (basic and acidic residues) spans Arg22–Ser56. 2 positions are modified to phosphoserine: Ser35 and Ser37. The next 6 helical transmembrane spans lie at Met96 to Leu116, Phe149 to Phe169, His183 to Val203, Leu230 to Ile250, Gly279 to Ser299, and Ile357 to Phe377.

This sequence belongs to the CDS family. Homodimer. Interacts with FOS; this interaction may enhance catalytic activity. Requires Mg(2+) as cofactor. In terms of tissue distribution, expressed in adult brain, eye, smooth muscle and testis. Highly expressed in the inner segment of the photoreceptor layer of adult retina.

The protein localises to the endoplasmic reticulum membrane. The catalysed reaction is a 1,2-diacyl-sn-glycero-3-phosphate + CTP + H(+) = a CDP-1,2-diacyl-sn-glycerol + diphosphate. The enzyme catalyses 1-octadecanoyl-2-(5Z,8Z,11Z,14Z-eicosatetraenoyl)-sn-glycero-3-phosphate + CTP + H(+) = 1-octadecanoyl-2-(5Z,8Z,11Z,14Z-eicosatetraenoyl)-sn-glycero-3-cytidine-5'-diphosphate + diphosphate. It carries out the reaction 1-octadecanoyl-2-(9Z,12Z-octadecadienoyl)-sn-glycero-3-phosphate + CTP + H(+) = 1-octadecanoyl-2-(9Z,12Z-octadecadienoyl)-sn-glycero-3-cytidine-5'-diphosphate + diphosphate. It catalyses the reaction 1-hexadecanoyl-2-(5Z,8Z,11Z,14Z-eicosatetraenoyl)-sn-glycero-3-phosphate + CTP + H(+) = 1-hexadecanoyl-2-(5Z,8Z,11Z,14Z-eicosatetraenoyl)-sn-glycero-3-cytidine-5'-diphosphate + diphosphate. The catalysed reaction is 1,2-di-(5Z,8Z,11Z,14Z)-eicosatetraenoyl-sn-glycero-3-phosphate + CTP + H(+) = 1,2-di-(5Z,8Z,11Z,14Z-eicosatetraenoyl)-sn-glycero-3-cytidine-5'-diphosphate + diphosphate. The enzyme catalyses 1-octadecanoyl-2-(9Z-octadecenoyl)-sn-glycero-3-phosphate + CTP + H(+) = 1-octadecanoyl-2-(9Z-octadecenoyl)-sn-glycero-3-cytidine-5'-diphosphate + diphosphate. It carries out the reaction 1-octadecanoyl-2-(4Z,7Z,10Z,13Z,16Z,19Z-docosahexaenoyl)-sn-glycero-3-phosphate + CTP + H(+) = 1-octadecanoyl-2-(4Z,7Z,10Z,13Z,16Z,19Z-docosahexaenoyl)-sn-glycero-3-cytidine-5'-diphosphate + diphosphate. It catalyses the reaction 1,2-di-(9Z,12Z-octadecadienoyl)-sn-glycero-3-phosphate + CTP + H(+) = 1,2-di-(9Z,12Z-octadecadienoyl)-sn-glycero-3-cytidine-5'-diphosphate + diphosphate. The catalysed reaction is 1,2-di-(9Z-octadecenoyl)-sn-glycero-3-phosphate + CTP + H(+) = 1,2-di-(9Z-octadecenoyl)-sn-glycero-3-cytidine-5'-diphosphate + diphosphate. Its pathway is phospholipid metabolism; CDP-diacylglycerol biosynthesis; CDP-diacylglycerol from sn-glycerol 3-phosphate: step 3/3. Functionally, catalyzes the conversion of phosphatidic acid (PA) to CDP-diacylglycerol (CDP-DAG), an essential intermediate in the synthesis of phosphatidylglycerol, cardiolipin and phosphatidylinositol. Exhibits almost no acyl chain preference for PA, showing no discrimination for the sn-1/sn-2 acyl chain composition of PAs. Plays an important role in regulating the growth of lipid droplets which are storage organelles at the center of lipid and energy homeostasis. Positively regulates the differentiation and development of adipocytes. The chain is Phosphatidate cytidylyltransferase 1 from Mus musculus (Mouse).